The sequence spans 364 residues: D-alanine--D-alanine ligase A (364 aa).

Residues 145–348 (KRLLRDAGLN…YTDLISRLIE (204 aa)) form the ATP-grasp domain. 175–230 (ESRLGLPLFVKPANQGSSVGVSKVANEAQYQQAVALAFEFDHKVVVEQGIKGREIE) contributes to the ATP binding site. Residues D302, E315, and N317 each contribute to the Mg(2+) site.

This sequence belongs to the D-alanine--D-alanine ligase family. Mg(2+) is required as a cofactor. Requires Mn(2+) as cofactor.

It is found in the cytoplasm. It catalyses the reaction 2 D-alanine + ATP = D-alanyl-D-alanine + ADP + phosphate + H(+). It functions in the pathway cell wall biogenesis; peptidoglycan biosynthesis. Its function is as follows. Cell wall formation. This Salmonella typhi protein is D-alanine--D-alanine ligase A (ddlA).